A 695-amino-acid polypeptide reads, in one-letter code: Testis-specific Y-encoded-like protein 2 (695 aa).

The tract at residues 1–56 is disordered; it reads MDRPDEGPPAKTRRLSSSESPQRDPPPPPPPPPLLRLPLPPPQQRPRLQEETEAAQ. Lys-11 participates in a covalent cross-link: Glycyl lysine isopeptide (Lys-Gly) (interchain with G-Cter in SUMO2). Residues Ser-18 and Ser-20 each carry the phosphoserine modification. Pro residues predominate over residues 23–44; the sequence is RDPPPPPPPPPLLRLPLPPPQQ. Residues Lys-163 and Lys-165 each participate in a glycyl lysine isopeptide (Lys-Gly) (interchain with G-Cter in SUMO2) cross-link. Residues 175–207 are disordered; it reads EDEDEQESMRSSRRRRRRRRRKQRKVKRESRQR. The segment covering 185–202 has biased composition (basic residues); sequence SSRRRRRRRRRKQRKVKR. Phosphothreonine is present on Thr-340. Disordered stretches follow at residues 471–603 and 632–695; these read DINE…RDIE and VEEE…GKTG. The span at 481–491 shows a compositional bias: basic and acidic residues; it reads SPDHDEVRNET. The segment covering 496–518 has biased composition (acidic residues); the sequence is ESADDNETTDNNESADDNNENPE. Positions 519 to 535 are enriched in basic and acidic residues; it reads DNNKNADDNKENPDNNK. Positions 539–557 are enriched in low complexity; it reads GNNFFNGGFWGSHGNNQDS. Composition is skewed to acidic residues over residues 558 to 601 and 632 to 677; these read SDSD…DDRD and VEEE…DLED. Residues Ser-670 and Ser-673 each carry the phosphoserine modification.

Belongs to the nucleosome assembly protein (NAP) family. As to quaternary structure, interacts with histones. Interacts with CASK. Part of a complex containing CASK, TBR1 and TSPYL2. Post-translationally, phosphorylation at Ser-20 and/or Thr-340 impairs function on cell proliferation. In terms of tissue distribution, ubiquitously expressed, with highest levels in testis, adrenal gland, cerebral cortex, ovary, skeletal muscle and spleen. Present in testis, adrenal gland, cerebral cortex and ovary (at protein level).

The protein localises to the nucleus. It localises to the cytoplasm. Functionally, part of the CASK/TBR1/TSPYL2 transcriptional complex which modulates gene expression in response to neuronal synaptic activity, probably by facilitating nucleosome assembly. May inhibit cell proliferation by inducing p53-dependent CDKN1A expression. This chain is Testis-specific Y-encoded-like protein 2 (TSPYL2), found in Macaca fascicularis (Crab-eating macaque).